The following is a 579-amino-acid chain: Zinc finger protein 384 (579 aa).

The interval 171–198 (TLTEEGGGGGGGGGTVAPPKPPRGRKKK) is disordered. Positions 175-185 (EGGGGGGGGGT) are enriched in gly residues. C2H2-type zinc fingers lie at residues 229–251 (YRCR…SKSH), 257–279 (HKCP…IRIH), 285–307 (YSCN…TRIH), 318–340 (HKCP…LRIH), 346–368 (YNCS…TRIH), 374–398 (YKCA…RRQH), 404–426 (FKCH…LSTH), and 434–456 (YTCT…MRKH). Residues 500-513 (QAQASQASQQQQQQ) are compositionally biased toward low complexity. The tract at residues 500–553 (QAQASQASQQQQQQQPPPPQPPHFQSPGAAPQGGGGGDSNQNPPPQCSFDLTPY) is disordered. Pro residues predominate over residues 514–523 (QPPPPQPPHF).

The protein belongs to the krueppel C2H2-type zinc-finger protein family. Interacts with BCAR1. As to expression, expressed in osteocytes, osteoblasts, and chondrocytes in bone.

It localises to the nucleus. In terms of biological role, transcription factor that binds the consensus DNA sequence [GC]AAAAA. Seems to bind and regulate the promoters of MMP1, MMP3, MMP7 and COL1A1. The sequence is that of Zinc finger protein 384 (Znf384) from Rattus norvegicus (Rat).